The following is a 465-amino-acid chain: Cysteine--tRNA ligase (465 aa).

Cysteine 29 lines the Zn(2+) pocket. Positions 31-41 match the 'HIGH' region motif; the sequence is PTVYNYIHIGN. Positions 209, 234, and 238 each coordinate Zn(2+). Residues 266 to 270 carry the 'KMSKS' region motif; it reads KMSKS. An ATP-binding site is contributed by lysine 269. Serine 270 carries the phosphoserine modification.

It belongs to the class-I aminoacyl-tRNA synthetase family. Monomer. The cofactor is Zn(2+).

Its subcellular location is the cytoplasm. The enzyme catalyses tRNA(Cys) + L-cysteine + ATP = L-cysteinyl-tRNA(Cys) + AMP + diphosphate. This chain is Cysteine--tRNA ligase, found in Anoxybacillus flavithermus (strain DSM 21510 / WK1).